The chain runs to 155 residues: Cytochrome c-type biogenesis protein CcmE (155 aa).

Over 1 to 7 (MTRKQKR) the chain is Cytoplasmic. A helical; Signal-anchor for type II membrane protein membrane pass occupies residues 8-28 (LVVIAGGMSFILAAVLLVMFA). Topologically, residues 29 to 155 (FSQSVAYFYM…GKGQEAKATP (127 aa)) are periplasmic. Heme is bound by residues His124 and Tyr128.

This sequence belongs to the CcmE/CycJ family.

It is found in the cell inner membrane. Functionally, heme chaperone required for the biogenesis of c-type cytochromes. Transiently binds heme delivered by CcmC and transfers the heme to apo-cytochromes in a process facilitated by CcmF and CcmH. The protein is Cytochrome c-type biogenesis protein CcmE of Rhizobium etli (strain ATCC 51251 / DSM 11541 / JCM 21823 / NBRC 15573 / CFN 42).